Consider the following 303-residue polypeptide: Fe-S cluster assembly protein DRE2 (303 aa).

An N-terminal SAM-like domain region spans residues 1-125; sequence MTHSRTALVL…WQKRAVTASA (125 aa). A linker region spans residues 126–188; the sequence is PVKLAPRQPV…GDAPIAENDL (63 aa). Cysteine 202, cysteine 213, cysteine 216, and cysteine 218 together coordinate [2Fe-2S] cluster. The tract at residues 202-218 is fe-S binding site A; sequence CGRTQTRRRKACKDCTC. Residues cysteine 266, cysteine 269, cysteine 277, and cysteine 280 each coordinate [4Fe-4S] cluster. 2 consecutive short sequence motifs (cx2C motif) follow at residues 266 to 269 and 277 to 280; these read CGSC and CSGC. The fe-S binding site B stretch occupies residues 266 to 280; it reads CGSCSLGDAFRCSGC.

It belongs to the anamorsin family. In terms of assembly, monomer. Interacts with TAH18. Interacts with MIA40. It depends on [2Fe-2S] cluster as a cofactor. [4Fe-4S] cluster serves as cofactor.

It localises to the cytoplasm. The protein resides in the mitochondrion intermembrane space. In terms of biological role, component of the cytosolic iron-sulfur (Fe-S) protein assembly (CIA) machinery required for the maturation of extramitochondrial Fe-S proteins. Part of an electron transfer chain functioning in an early step of cytosolic Fe-S biogenesis, facilitating the de novo assembly of a [4Fe-4S] cluster on the scaffold complex CFD1-NBP35. Electrons are transferred to DRE2 from NADPH via the FAD- and FMN-containing protein TAH18. TAH18-DRE2 are also required for the assembly of the diferric tyrosyl radical cofactor of ribonucleotide reductase (RNR), probably by providing electrons for reduction during radical cofactor maturation in the catalytic small subunit RNR2. The polypeptide is Fe-S cluster assembly protein DRE2 (Eremothecium gossypii (strain ATCC 10895 / CBS 109.51 / FGSC 9923 / NRRL Y-1056) (Yeast)).